Consider the following 262-residue polypeptide: Pyridoxine 5'-phosphate synthase (262 aa).

A 3-amino-2-oxopropyl phosphate-binding site is contributed by asparagine 6. A 1-deoxy-D-xylulose 5-phosphate-binding site is contributed by 8–9; the sequence is DH. Arginine 17 contributes to the 3-amino-2-oxopropyl phosphate binding site. Catalysis depends on histidine 43, which acts as the Proton acceptor. 2 residues coordinate 1-deoxy-D-xylulose 5-phosphate: arginine 45 and histidine 50. The Proton acceptor role is filled by glutamate 70. Threonine 102 contributes to the 1-deoxy-D-xylulose 5-phosphate binding site. Histidine 215 functions as the Proton donor in the catalytic mechanism. 3-amino-2-oxopropyl phosphate contacts are provided by residues glycine 216 and 237 to 238; that span reads GH.

Belongs to the PNP synthase family. In terms of assembly, homooctamer; tetramer of dimers.

Its subcellular location is the cytoplasm. The catalysed reaction is 3-amino-2-oxopropyl phosphate + 1-deoxy-D-xylulose 5-phosphate = pyridoxine 5'-phosphate + phosphate + 2 H2O + H(+). The protein operates within cofactor biosynthesis; pyridoxine 5'-phosphate biosynthesis; pyridoxine 5'-phosphate from D-erythrose 4-phosphate: step 5/5. Catalyzes the complicated ring closure reaction between the two acyclic compounds 1-deoxy-D-xylulose-5-phosphate (DXP) and 3-amino-2-oxopropyl phosphate (1-amino-acetone-3-phosphate or AAP) to form pyridoxine 5'-phosphate (PNP) and inorganic phosphate. The sequence is that of Pyridoxine 5'-phosphate synthase from Helicobacter pylori (strain P12).